The primary structure comprises 301 residues: Ribosomal RNA small subunit methyltransferase H (301 aa).

Residues Gly31 to Tyr33, Asp49, Phe76, Asp97, and Gln104 contribute to the S-adenosyl-L-methionine site.

The protein belongs to the methyltransferase superfamily. RsmH family.

It is found in the cytoplasm. The catalysed reaction is cytidine(1402) in 16S rRNA + S-adenosyl-L-methionine = N(4)-methylcytidine(1402) in 16S rRNA + S-adenosyl-L-homocysteine + H(+). Functionally, specifically methylates the N4 position of cytidine in position 1402 (C1402) of 16S rRNA. The polypeptide is Ribosomal RNA small subunit methyltransferase H (Ehrlichia ruminantium (strain Gardel)).